Reading from the N-terminus, the 503-residue chain is ATP synthase subunit alpha (503 aa).

169-176 is a binding site for ATP; sequence GDRQTGKT.

Belongs to the ATPase alpha/beta chains family. In terms of assembly, F-type ATPases have 2 components, CF(1) - the catalytic core - and CF(0) - the membrane proton channel. CF(1) has five subunits: alpha(3), beta(3), gamma(1), delta(1), epsilon(1). CF(0) has three main subunits: a(1), b(2) and c(9-12). The alpha and beta chains form an alternating ring which encloses part of the gamma chain. CF(1) is attached to CF(0) by a central stalk formed by the gamma and epsilon chains, while a peripheral stalk is formed by the delta and b chains.

It is found in the cell membrane. The enzyme catalyses ATP + H2O + 4 H(+)(in) = ADP + phosphate + 5 H(+)(out). Its function is as follows. Produces ATP from ADP in the presence of a proton gradient across the membrane. The alpha chain is a regulatory subunit. The chain is ATP synthase subunit alpha from Macrococcus caseolyticus (strain JCSC5402) (Macrococcoides caseolyticum).